The chain runs to 494 residues: Cytochrome P450 2C44 (494 aa).

The signal sequence occupies residues 1 to 25 (MELLGLPTLALLVLVMSLSLLSVWT). S131 is subject to Phosphoserine. N6-acetyllysine occurs at positions 253 and 379. Residue C439 coordinates heme.

It belongs to the cytochrome P450 family. Requires heme as cofactor. Highly expressed in liver, particularly in hepatocytes and bile duct epithelial cells (at protein level). Expressed in nephron segments. Prominent expression is detected in proximal tubules at the corticomedullary junction (at protein level). Also expressed in renal cortical collecting duct. Lower expression levels are detected in adrenal glands.

It localises to the endoplasmic reticulum membrane. It is found in the microsome membrane. It catalyses the reaction (5Z,8Z,11Z,14Z)-eicosatetraenoate + reduced [NADPH--hemoprotein reductase] + O2 = (8R,9S)-epoxy-(5Z,11Z,14Z)-eicosatrienoate + oxidized [NADPH--hemoprotein reductase] + H2O + H(+). The catalysed reaction is (5Z,8Z,11Z,14Z)-eicosatetraenoate + reduced [NADPH--hemoprotein reductase] + O2 = (11R,12S)-epoxy-(5Z,8Z,14Z)-eicosatrienoate + oxidized [NADPH--hemoprotein reductase] + H2O + H(+). The enzyme catalyses (5Z,8Z,11Z,14Z)-eicosatetraenoate + reduced [NADPH--hemoprotein reductase] + O2 = 14,15-epoxy-(5Z,8Z,11Z)-eicosatrienoate + oxidized [NADPH--hemoprotein reductase] + H2O + H(+). It carries out the reaction (5Z,8Z,11Z,14Z,17Z)-eicosapentaenoate + reduced [NADPH--hemoprotein reductase] + O2 = 8,9-epoxy-(5Z,11Z,14Z,17Z)-eicosatetraenoate + oxidized [NADPH--hemoprotein reductase] + H2O + H(+). It catalyses the reaction (5Z,8Z,11Z,14Z,17Z)-eicosapentaenoate + reduced [NADPH--hemoprotein reductase] + O2 = 11,12-epoxy-(5Z,8Z,14Z,17Z)-eicosatetraenoate + oxidized [NADPH--hemoprotein reductase] + H2O + H(+). The catalysed reaction is (5Z,8Z,11Z,14Z,17Z)-eicosapentaenoate + reduced [NADPH--hemoprotein reductase] + O2 = 14,15-epoxy-(5Z,8Z,11Z,17Z)-eicosatetraenoate + oxidized [NADPH--hemoprotein reductase] + H2O + H(+). The enzyme catalyses (5Z,8Z,11Z,14Z,17Z)-eicosapentaenoate + reduced [NADPH--hemoprotein reductase] + O2 = (17R,18S)-epoxy-(5Z,8Z,11Z,14Z)-eicosatetraenoate + oxidized [NADPH--hemoprotein reductase] + H2O + H(+). It carries out the reaction (5Z,8Z,11Z,14Z,17Z)-eicosapentaenoate + reduced [NADPH--hemoprotein reductase] + O2 = (17S,18R)-epoxy-(5Z,8Z,11Z,14Z)-eicosatetraenoate + oxidized [NADPH--hemoprotein reductase] + H2O + H(+). It catalyses the reaction 20-hydroxy-(5Z,8Z,11Z,14Z)-eicosatetraenoate + reduced [NADPH--hemoprotein reductase] + O2 = 20-hydroxy-8,9-epoxy-(5Z,11Z,14Z)-eicosatrienoate + oxidized [NADPH--hemoprotein reductase] + H2O + H(+). It participates in lipid metabolism; arachidonate metabolism. A cytochrome P450 monooxygenase involved in polyunsaturated fatty acids (PUFAs) metabolism and signaling. Catalyzes preferentially the epoxidation of double bonds of PUFAs. Converts arachidonic acid (ARA, C20:4(n-6)) primarily to stereospecific products 8R,9S-epoxyeicosatrienoate (EET) and 11R,12S-EET. Plays a major role in the formation of EETs and hydroxy-EETs (HEETs) in kidney. Via EETs may inhibit the epithelial sodium channels (ENaCs) in nephron segments, preventing excessive sodium absorption during high dietary salt intake. Participates in the formation of anti-inflammatory hydroxyepoxyeicosatrienoic acids (HEETs) by converting 20-hydroxyeicosatetraenoic acid (20-HETE) to 20,8,9-HEET, an activator of PPARA. Metabolizes eicosapentaenoic acid (EPA, C20:5(n-3)) to epoxyeicosatetraenoic acid (EETeTr) regioisomers, 8,9-, 11,12-, 14,15-, and 17,18- EETeTr, preferentially producing 17R,18S enantiomer. Mechanistically, uses molecular oxygen inserting one oxygen atom into a substrate, and reducing the second into a water molecule, with two electrons provided by NADPH via cytochrome P450 reductase (CPR; NADPH-ferrihemoprotein reductase). The sequence is that of Cytochrome P450 2C44 from Mus musculus (Mouse).